The sequence spans 373 residues: MNTFGDNFRVTTWGESHGKALGAVIDGCPANLPILEEDIQNELNRRRPGYSIFSTPRKEEDMLEILSGIFEGKTTGTPISGLVFNKGQKSKDYSKIKDTPRPGHADLNYFLKYGNYDYRGGGRSSGRTTIGNVIGGAVAKKLIEFTHNIKIIGYSTKIGKINGDFDYYKNPEFFESDSNIEKLFEKTENNPLRCPSKNSDEMKDYVLDAMDKKDSVGGIIEIIIKGIPQGVGNPVFNKLEGKLGSAFIGINAVKGFEIGRGFESSDLYGSEMNDEYYIDENSINEKTNNAGGIIGGISTGSPVVLRVSIKPTPSISKIQDSVNLISNENEKIEIGGRHDPIIVPRVIPVLESMAAITVADLMISGGYINPCRL.

NADP(+) is bound at residue Arg46. Residues 123-125 (RSS), 251-252 (NA), Gly295, 310-314 (KPTPS), and Arg337 contribute to the FMN site.

The protein belongs to the chorismate synthase family. The cofactor is FMNH2.

It carries out the reaction 5-O-(1-carboxyvinyl)-3-phosphoshikimate = chorismate + phosphate. Its pathway is metabolic intermediate biosynthesis; chorismate biosynthesis; chorismate from D-erythrose 4-phosphate and phosphoenolpyruvate: step 7/7. Catalyzes the anti-1,4-elimination of the C-3 phosphate and the C-6 proR hydrogen from 5-enolpyruvylshikimate-3-phosphate (EPSP) to yield chorismate, which is the branch point compound that serves as the starting substrate for the three terminal pathways of aromatic amino acid biosynthesis. This reaction introduces a second double bond into the aromatic ring system. The sequence is that of Chorismate synthase from Methanococcus maripaludis (strain DSM 14266 / JCM 13030 / NBRC 101832 / S2 / LL).